The sequence spans 542 residues: Chaperonin GroEL 2 (542 aa).

Residues Thr30–Pro33, Lys51, Asp87–Thr91, Gly415, and Asp496 contribute to the ATP site.

Belongs to the chaperonin (HSP60) family. Forms a cylinder of 14 subunits composed of two heptameric rings stacked back-to-back. Interacts with the co-chaperonin GroES.

It is found in the cytoplasm. The enzyme catalyses ATP + H2O + a folded polypeptide = ADP + phosphate + an unfolded polypeptide.. Together with its co-chaperonin GroES, plays an essential role in assisting protein folding. The GroEL-GroES system forms a nano-cage that allows encapsulation of the non-native substrate proteins and provides a physical environment optimized to promote and accelerate protein folding. The sequence is that of Chaperonin GroEL 2 from Rhizobium etli (strain ATCC 51251 / DSM 11541 / JCM 21823 / NBRC 15573 / CFN 42).